A 558-amino-acid chain; its full sequence is Formate--tetrahydrofolate ligase (558 aa).

66–73 (TPAGEGKT) contributes to the ATP binding site.

The protein belongs to the formate--tetrahydrofolate ligase family.

The catalysed reaction is (6S)-5,6,7,8-tetrahydrofolate + formate + ATP = (6R)-10-formyltetrahydrofolate + ADP + phosphate. It functions in the pathway one-carbon metabolism; tetrahydrofolate interconversion. The sequence is that of Formate--tetrahydrofolate ligase from Neisseria meningitidis serogroup C (strain 053442).